We begin with the raw amino-acid sequence, 514 residues long: Na(+)/H(+) antiporter NhaB (514 aa).

The next 12 helical transmembrane spans lie at 23–43 (LALI…PFVA), 63–83 (PLLP…TSAA), 97–117 (LLLM…LFIF), 120–140 (LLLS…AAAF), 144–164 (FLDA…FYGI), 202–222 (LMMH…VGEP), 238–258 (FFLR…FTCV), 303–323 (AIIG…VGLI), 357–377 (LTVF…APII), 391–411 (LFYL…VGTI), 447–467 (ATPN…APLI), and 475–495 (VWMA…CVEF).

This sequence belongs to the NhaB Na(+)/H(+) (TC 2.A.34) antiporter family.

The protein localises to the cell inner membrane. The catalysed reaction is 2 Na(+)(in) + 3 H(+)(out) = 2 Na(+)(out) + 3 H(+)(in). Its function is as follows. Na(+)/H(+) antiporter that extrudes sodium in exchange for external protons. The sequence is that of Na(+)/H(+) antiporter NhaB from Citrobacter koseri (strain ATCC BAA-895 / CDC 4225-83 / SGSC4696).